A 100-amino-acid polypeptide reads, in one-letter code: Putative pterin-4-alpha-carbinolamine dehydratase (100 aa).

Belongs to the pterin-4-alpha-carbinolamine dehydratase family.

It catalyses the reaction (4aS,6R)-4a-hydroxy-L-erythro-5,6,7,8-tetrahydrobiopterin = (6R)-L-erythro-6,7-dihydrobiopterin + H2O. This chain is Putative pterin-4-alpha-carbinolamine dehydratase, found in Rhodopseudomonas palustris (strain TIE-1).